The following is a 176-amino-acid chain: Dual specificity phosphatase 28 (176 aa).

The Tyrosine-protein phosphatase domain occupies 17-159 (PPLVRVAPSL…LQKYEEALQA (143 aa)). The Phosphocysteine intermediate role is filled by C103.

It belongs to the protein-tyrosine phosphatase family. Non-receptor class dual specificity subfamily. Monomer.

The catalysed reaction is O-phospho-L-tyrosyl-[protein] + H2O = L-tyrosyl-[protein] + phosphate. It catalyses the reaction O-phospho-L-seryl-[protein] + H2O = L-seryl-[protein] + phosphate. It carries out the reaction O-phospho-L-threonyl-[protein] + H2O = L-threonyl-[protein] + phosphate. Has phosphatase activity with the synthetic substrate 6,8-difluoro-4-methylumbelliferyl phosphate (in vitro). Has almost no detectable activity with phosphotyrosine, even less activity with phosphothreonine and displays complete lack of activity with phosphoserine. The poor activity with phosphotyrosine may be due to steric hindrance by bulky amino acid sidechains that obstruct access to the active site. The chain is Dual specificity phosphatase 28 (DUSP28) from Homo sapiens (Human).